A 184-amino-acid chain; its full sequence is Oligoribonuclease (184 aa).

The Exonuclease domain occupies leucine 8–leucine 169. Residue tyrosine 129 is part of the active site.

It belongs to the oligoribonuclease family.

The protein resides in the cytoplasm. 3'-to-5' exoribonuclease specific for small oligoribonucleotides. The chain is Oligoribonuclease from Buchnera aphidicola subsp. Schizaphis graminum (strain Sg).